Consider the following 309-residue polypeptide: Homoserine kinase (309 aa).

Residue Pro95 to Ala105 participates in ATP binding.

The protein belongs to the GHMP kinase family. Homoserine kinase subfamily.

It localises to the cytoplasm. It carries out the reaction L-homoserine + ATP = O-phospho-L-homoserine + ADP + H(+). It functions in the pathway amino-acid biosynthesis; L-threonine biosynthesis; L-threonine from L-aspartate: step 4/5. Its function is as follows. Catalyzes the ATP-dependent phosphorylation of L-homoserine to L-homoserine phosphate. This Corynebacterium glutamicum (strain R) protein is Homoserine kinase.